We begin with the raw amino-acid sequence, 506 residues long: Lysine--tRNA ligase (506 aa).

Residues glutamate 416 and glutamate 423 each contribute to the Mg(2+) site.

This sequence belongs to the class-II aminoacyl-tRNA synthetase family. Homodimer. It depends on Mg(2+) as a cofactor.

Its subcellular location is the cytoplasm. The catalysed reaction is tRNA(Lys) + L-lysine + ATP = L-lysyl-tRNA(Lys) + AMP + diphosphate. This Xylella fastidiosa (strain M23) protein is Lysine--tRNA ligase.